The primary structure comprises 1345 residues: Major capsid protein (1345 aa).

The protein belongs to the herpesviridae major capsid protein family. In terms of assembly, homomultimer. Makes the hexons and eleven out of twelve pentons. Interacts with triplex proteins 1/TRX1 and 2/TRX2; adjacent capsomers are linked together in groups of three by triplexes, heterotrimeric complexes composed of one molecule of TRX1 and two molecules of TRX2. Interacts with scaffold protein; this interaction allows efficient MCP transport to the host nucleus. Interacts with capsid vertex component 2/CVC2. Interacts with the small capsomere-interacting protein/SCP.

It localises to the virion. It is found in the host nucleus. Self-assembles to form an icosahedral capsid with a T=16 symmetry, about 200 nm in diameter, and consisting of 150 hexons and 12 pentons (total of 162 capsomers). Hexons form the edges and faces of the capsid and are each composed of six MCP molecules. In contrast, one penton is found at each of the 12 vertices. Eleven of the pentons are MCP pentamers, while the last vertex is occupied by the portal complex. The capsid is surrounded by a layer of proteinaceous material designated the tegument which, in turn, is enclosed in an envelope of host cell-derived lipids containing virus-encoded glycoproteins. The chain is Major capsid protein from Human herpesvirus 6A (strain Uganda-1102) (HHV-6 variant A).